The sequence spans 415 residues: Gamma-glutamyl phosphate reductase (415 aa).

Belongs to the gamma-glutamyl phosphate reductase family.

The protein resides in the cytoplasm. The enzyme catalyses L-glutamate 5-semialdehyde + phosphate + NADP(+) = L-glutamyl 5-phosphate + NADPH + H(+). It participates in amino-acid biosynthesis; L-proline biosynthesis; L-glutamate 5-semialdehyde from L-glutamate: step 2/2. Catalyzes the NADPH-dependent reduction of L-glutamate 5-phosphate into L-glutamate 5-semialdehyde and phosphate. The product spontaneously undergoes cyclization to form 1-pyrroline-5-carboxylate. The protein is Gamma-glutamyl phosphate reductase of Lachnospira eligens (strain ATCC 27750 / DSM 3376 / VPI C15-48 / C15-B4) (Eubacterium eligens).